Here is a 386-residue protein sequence, read N- to C-terminus: 8-amino-7-oxononanoate synthase (386 aa).

Arg-26 provides a ligand contact to substrate. 104–105 (GY) lines the pyridoxal 5'-phosphate pocket. His-129 contacts substrate. Residues Ser-176, His-204, and Thr-232 each coordinate pyridoxal 5'-phosphate. Lys-235 carries the N6-(pyridoxal phosphate)lysine modification. Thr-349 serves as a coordination point for substrate.

This sequence belongs to the class-II pyridoxal-phosphate-dependent aminotransferase family. BioF subfamily. Homodimer. The cofactor is pyridoxal 5'-phosphate.

The enzyme catalyses 6-carboxyhexanoyl-[ACP] + L-alanine + H(+) = (8S)-8-amino-7-oxononanoate + holo-[ACP] + CO2. It participates in cofactor biosynthesis; biotin biosynthesis. Functionally, catalyzes the decarboxylative condensation of pimeloyl-[acyl-carrier protein] and L-alanine to produce 8-amino-7-oxononanoate (AON), [acyl-carrier protein], and carbon dioxide. The protein is 8-amino-7-oxononanoate synthase of Chromohalobacter salexigens (strain ATCC BAA-138 / DSM 3043 / CIP 106854 / NCIMB 13768 / 1H11).